The primary structure comprises 201 residues: Large ribosomal subunit protein bL25 (201 aa).

Belongs to the bacterial ribosomal protein bL25 family. CTC subfamily. Part of the 50S ribosomal subunit; part of the 5S rRNA/L5/L18/L25 subcomplex. Contacts the 5S rRNA. Binds to the 5S rRNA independently of L5 and L18.

Functionally, this is one of the proteins that binds to the 5S RNA in the ribosome where it forms part of the central protuberance. In Akkermansia muciniphila (strain ATCC BAA-835 / DSM 22959 / JCM 33894 / BCRC 81048 / CCUG 64013 / CIP 107961 / Muc), this protein is Large ribosomal subunit protein bL25.